A 320-amino-acid polypeptide reads, in one-letter code: Reticulocalbin-2 (320 aa).

A signal peptide spans 1–25 (MRLGPRPAALGLLLPLLLYAAVAGA). EF-hand domains are found at residues 64–99 (EQQRRLQSIIKKIDSDSDGFLTENELSQWIQMSFKH) and 100–135 (YAMQEAKQQFVEYDKNSDGAVTWDEYNIQMYDRVID). Positions 77, 79, 81, 88, 113, 115, 117, and 124 each coordinate Ca(2+). Phosphothreonine is present on Thr140. EF-hand domains follow at residues 150–185 (FRQLHLKDKKRFEKANQDSGPGLSLEEFIAFEHPEE), 189–224 (MTEFVIQEALEEHDKNGDGFVSLEEFLGDYRRDPTA), 230–265 (WILVEKDRFVNDYDKDNDGRLDPQELLSWVVPNNQG), and 266–301 (IAQEEALHLIDEMDLNSDKKLSEEEILENQDLFLTS). Ca(2+) contacts are provided by Asp167, Glu176, Asp202, Asn204, Asp206, Glu213, Asp243, Asp245, Asp247, Arg249, Glu254, Asp279, Asn281, Asp283, Lys285, and Glu290. The short motif at 317–320 (HDEL) is the Prevents secretion from ER element.

This sequence belongs to the CREC family.

It localises to the endoplasmic reticulum lumen. Its function is as follows. Not known. Binds calcium. This Mus musculus (Mouse) protein is Reticulocalbin-2 (Rcn2).